Consider the following 300-residue polypeptide: Putative S-adenosyl-L-methionine-dependent methyltransferase Mkms_0379 (300 aa).

S-adenosyl-L-methionine is bound by residues D128 and 157 to 158 (DL).

Belongs to the UPF0677 family.

Exhibits S-adenosyl-L-methionine-dependent methyltransferase activity. In Mycobacterium sp. (strain KMS), this protein is Putative S-adenosyl-L-methionine-dependent methyltransferase Mkms_0379.